Here is a 350-residue protein sequence, read N- to C-terminus: Salicylate decarboxylase (350 aa).

This sequence belongs to the metallo-dependent hydrolases superfamily. Homotetramer.

The enzyme catalyses salicylate + H(+) = phenol + CO2. Inhibited by AgNO(3), HgCl(2), p-chloromercuribenzoic acid and NiCl(2). In terms of biological role, reversibly catalyzes the regioselective carboxylation of phenol to form salicylic acid. Involved in a pathway for the degradation of salicylate via phenol. Also catalyzes the decarboxylation of beta-resorcylic acid (2,4-dihydroxybenzoic acid) into resorcinol (1,3-dihydroxybenzene), gamma-resorcylic acid (2,6-dihydroxybenzoic acid) into resorcinol, 2,3-dihydroxybenzoic acid into catechol (1,2-dihydroxybenzene), and 4-aminosalicylic acid into 3-aminophenol. This Cutaneotrichosporon moniliiforme (Yeast) protein is Salicylate decarboxylase.